The primary structure comprises 224 residues: Peptidyl-prolyl cis-trans isomerase FKBP3 (224 aa).

Alanine 2 bears the N-acetylalanine mark. Residue serine 36 is modified to Phosphoserine. Residues 89-102 (KLNEDKPKETKSEE) are compositionally biased toward basic and acidic residues. Residues 89-113 (KLNEDKPKETKSEETLDEGPPKYTK) form a disordered region. N6-acetyllysine is present on lysine 99. A PPIase FKBP-type domain is found at 128 to 224 (GDVVHCWYTG…IFEVELVDID (97 aa)). The residue at position 152 (serine 152) is a Phosphoserine. Lysine 170 is subject to N6-acetyllysine.

Belongs to the FKBP-type PPIase family.

The protein resides in the nucleus. The enzyme catalyses [protein]-peptidylproline (omega=180) = [protein]-peptidylproline (omega=0). Its activity is regulated as follows. Inhibited preferentially by rapamycin over FK506. FK506- and rapamycin-binding proteins (FKBPs) constitute a family of receptors for the two immunosuppressants which inhibit T-cell proliferation by arresting two dinstinct cytoplasmic signal transmission pathways. PPIases accelerate the folding of proteins. In Bos taurus (Bovine), this protein is Peptidyl-prolyl cis-trans isomerase FKBP3 (FKBP3).